Here is a 367-residue protein sequence, read N- to C-terminus: uncharacterized protein (367 aa).

A helical transmembrane segment spans residues 6-26; sequence IAAGVVVALAAVWCTSAWFTG.

It to E.coli YdgA and YihF.

Its subcellular location is the membrane. This is an uncharacterized protein from Haemophilus influenzae (strain ATCC 51907 / DSM 11121 / KW20 / Rd).